We begin with the raw amino-acid sequence, 770 residues long: Molybdenum cofactor sulfurase (770 aa).

Lys243 is subject to N6-(pyridoxal phosphate)lysine. Residue Cys405 is part of the active site. In terms of domain architecture, MOSC spans 611–769 (GDEVANWLCQ…LACGDPITVL (159 aa)). Ser726 carries the phosphoserine modification.

This sequence belongs to the class-V pyridoxal-phosphate-dependent aminotransferase family. MOCOS subfamily. It depends on pyridoxal 5'-phosphate as a cofactor.

The enzyme catalyses Mo-molybdopterin + L-cysteine + AH2 = thio-Mo-molybdopterin + L-alanine + A + H2O. It participates in cofactor biosynthesis; molybdopterin biosynthesis. Its function is as follows. Sulfurates the molybdenum cofactor. Sulfation of molybdenum is essential for xanthine dehydrogenase (XDH) and aldehyde oxidase (ADO) enzymes in which molybdenum cofactor is liganded by 1 oxygen and 1 sulfur atom in active form. This Drosophila grimshawi (Hawaiian fruit fly) protein is Molybdenum cofactor sulfurase.